We begin with the raw amino-acid sequence, 140 residues long: Small ribosomal subunit protein uS12 (140 aa).

Residue P59 is modified to Hydroxyproline.

Belongs to the universal ribosomal protein uS12 family.

In Encephalitozoon cuniculi (strain GB-M1) (Microsporidian parasite), this protein is Small ribosomal subunit protein uS12 (RPS23).